The following is a 490-amino-acid chain: Actin-related protein 6 (490 aa).

Belongs to the actin family. ARP6 subfamily.

The protein localises to the cytoplasm. It localises to the cytoskeleton. The polypeptide is Actin-related protein 6 (Dictyostelium discoideum (Social amoeba)).